A 367-amino-acid polypeptide reads, in one-letter code: DNA replication and repair protein RecF (367 aa).

Residue 30-37 (GANGSGKT) coordinates ATP.

This sequence belongs to the RecF family.

It is found in the cytoplasm. Its function is as follows. The RecF protein is involved in DNA metabolism; it is required for DNA replication and normal SOS inducibility. RecF binds preferentially to single-stranded, linear DNA. It also seems to bind ATP. The protein is DNA replication and repair protein RecF of Pseudomonas putida (strain W619).